The primary structure comprises 9518 residues: Nonribosomal peptide synthetase ungA' (9518 aa).

The segment at 214-611 is adenylation 1; that stretch reads ERARETPNAP…ARKDDQVKVR (398 aa). One can recognise a Carrier 1 domain in the interval 738 to 814; that stretch reads APRTEMEWRL…DLAEVARLEQ (77 aa). Serine 775 bears the O-(pantetheine 4'-phosphoryl)serine mark. The condensation 1 stretch occupies residues 853 to 1250; that stretch reads DLLPCSPLQE…EEVLRQISRE (398 aa). The tract at residues 1292 to 1695 is adenylation 2; that stretch reads QRVQEQPDRP…GRKDTQVKIR (404 aa). The Carrier 2 domain occupies 1822–1898; sequence LPQTELERRL…RLAHCSQTEQ (77 aa). Position 1859 is an O-(pantetheine 4'-phosphoryl)serine (serine 1859). An epimerization 1 region spans residues 1911–2336; sequence TFALSPIQQL…QRSLEVVAKE (426 aa). The interval 2376–2803 is condensation 2; it reads EDIYPCSPVQ…DNLQIASSQD (428 aa). The adenylation 3 stretch occupies residues 2829–3224; that stretch reads RIQQQPEAPA…NRKDNQVKIR (396 aa). In terms of domain architecture, Carrier 3 spans 3352–3428; sequence APATASEQRL…DMAQTLKVES (77 aa). Serine 3389 bears the O-(pantetheine 4'-phosphoryl)serine mark. Residues 3465 to 3869 form a condensation 3 region; that stretch reads EDVLPCTPLQ…QVCKEASQYL (405 aa). The interval 3906–4307 is adenylation 4; the sequence is QQAHQRPNAS…GRRDAQVKIR (402 aa). The region spanning 4436-4512 is the Carrier 4 domain; sequence TPTTITECRI…RLAACTTPVD (77 aa). Serine 4473 carries the O-(pantetheine 4'-phosphoryl)serine modification. The interval 4527–4954 is epimerization 2; sequence ALSPIQQLFV…EDAAQELPSL (428 aa). The condensation 4 stretch occupies residues 4990–5411; sequence VEDIYPCSPI…ANLISKEDLR (422 aa). Residues 5433–5829 are adenylation 5; it reads SEQAQNQPDA…GRKDGQVKIR (397 aa). A Carrier 5 domain is found at 5957–6033; sequence VASSPVELAL…QLAKNSGLQA (77 aa). The residue at position 5994 (serine 5994) is an O-(pantetheine 4'-phosphoryl)serine. Residues 6050–6470 are epimerization 3; sequence ELSPIQRMFF…CEHSLVMAAH (421 aa). Residues 6512–6856 are condensation 5; the sequence is VEDIYPCTPI…TGISVQNNAS (345 aa). The segment at 6947–7338 is adenylation 6; the sequence is LRPNSSAIHA…GRKDSQVKVR (392 aa). The Carrier 6 domain maps to 7464–7540; sequence LPRTEVEMQL…GLAPSAASQA (77 aa). O-(pantetheine 4'-phosphoryl)serine is present on serine 7501. Positions 7555–7978 are epimerization 4; it reads ELSPIQQMFI…LQTAARELPH (424 aa). Residues 8016 to 8444 form a condensation 6 region; sequence VEDIYPLTPI…QVDLAGRHDQ (429 aa). The segment at 8468–8867 is adenylation 7; sequence MQCQQRPDAT…SRKDAQVKIR (400 aa). The Carrier 7 domain occupies 8995-9071; sequence PLTTEMEWRL…DMAHYLREGQ (77 aa). O-(pantetheine 4'-phosphoryl)serine is present on serine 9032. The interval 9111-9454 is condensation 7; the sequence is DVYPTTELQD…DNLEHDAGTS (344 aa).

It belongs to the NRP synthetase family.

It functions in the pathway secondary metabolite biosynthesis. Its function is as follows. Nonribosomal peptide synthetase; part of the gene cluster that mediates the biosynthesis of the unguisins, gamma-aminobutyric acid (GABA)-containing fungal cyclic heptapeptides with the amino acid sequence cyclo-(D-Ala1-D-Val2-L-Leu3-beta-MePhe4-D-Ala5-D-Trp6-GABA7) for unguisin H and cyclo-(D-Ala1-D-Ala2-L-Leu3-beta-MePhe4-D-Ala5-D-Trp6-GABA7) for unguisin I. UngA' is the main enzyme within the cluster which condenses the 7 residues using its respective 7 modules. The terminal condensation domain (Ct) is involved in cyclization with D-alanine and thereby releasing of unguisins H and I. The alanine racemase ungC' provides D-alanine, which is then accepted by the first adenylation domain of ungA', whereas the methyltransferase ungE' provides the (2R,3R)-beta-methylphenylalanine residue incorporated by the module 4. Finally, the hydrolase ungD' catalyzes the hydrolysis between the D-tryptophan and GABA residues of unguisins H and I to produce the corresponding linear peptides. This is Nonribosomal peptide synthetase ungA' from Aspergillus campestris (strain IBT 28561).